Consider the following 590-residue polypeptide: KNR4/SMI1 homolog 2 (590 aa).

3 disordered regions span residues 59–97, 216–239, and 407–590; these read SSSHSLIEGGNNGSRTSLSRNGSSTTVGYRPGLRSSNTN, FQHQQQQQQHQKATSSADASETHG, and TPQR…DVAL. Positions 71–85 are enriched in polar residues; that stretch reads GSRTSLSRNGSSTTV. Over residues 217–226 the composition is skewed to low complexity; that stretch reads QHQQQQQQHQ. Residues 430–454 show a composition bias toward polar residues; it reads PSMSGATANTNKSQNPLINMESSSK. Basic and acidic residues-rich tracts occupy residues 470 to 481 and 489 to 515; these read PEEPVKKSEVKS and EPEKETKQKDEIIEEKPEVIETPAKED. The span at 516–528 shows a compositional bias: acidic residues; that stretch reads DKEEEEEEQEEEK. Basic residues predominate over residues 554–568; sequence TQKKNQSKKAKKQQQ. Acidic residues predominate over residues 576–590; that stretch reads NDVEEVAEDLNDVAL.

The protein belongs to the KNR4/SMI1 family.

The sequence is that of KNR4/SMI1 homolog 2 from Debaryomyces hansenii (strain ATCC 36239 / CBS 767 / BCRC 21394 / JCM 1990 / NBRC 0083 / IGC 2968) (Yeast).